The following is a 269-amino-acid chain: Aegyptin-like protein (269 aa).

An N-terminal signal peptide occupies residues 1–19; the sequence is MKLLLLLASVLCLALIVSA. The interval 19 to 152 is disordered; it reads ARPSDETTDQ…GGAEGGEESP (134 aa). The interval 38 to 148 is GE-rich region which mediates binding of Ca(2+); sequence TSDSYHQEED…AGEEGGAEGG (111 aa). 3 stretches are compositionally biased toward acidic residues: residues 56–73, 98–121, and 131–149; these read GTED…ESSS, GEED…EGGA, and GGAD…EGGE. A mediates binding of host collagen and inhibition of platelet aggregation region spans residues 148 to 269; that stretch reads GEESPVNTYH…DCIVEKRDSE (122 aa). 2 disulfides stabilise this stretch: Cys-208–Cys-261 and Cys-230–Cys-239.

The protein belongs to the aegyptin family. In terms of tissue distribution, female saliva (at protein level). Distal lateral lobes of female salivary gland (at protein level). Low-level expression in male salivary gland. Not detected in female and male carcasses.

It localises to the secreted. Functionally, modulates blood feeding of female mosquitoes on vertebrate hosts. Inhibits collagen-induced platelet aggregation in the host via preventing collagen interaction with its ligands: glycoprotein VI and integrin alpha-2/beta-1 (ITGA2/ITGB1). Inhibits collagen-induced increase of Ca(2+) levels in host platelets. Binds to host collagens. Binds Ca(2+). Prevents a decrease in platelet count in the host blood after collagen injection. Its function is as follows. (Microbial infection) Does not affect the development of Plasmodium berghei parasites in mosquitoes. The sequence is that of Aegyptin-like protein from Anopheles stephensi (Indo-Pakistan malaria mosquito).